Reading from the N-terminus, the 62-residue chain is Large ribosomal subunit protein bL28 (62 aa).

Residues 1 to 23 form a disordered region; the sequence is MGKQCYVTGRKASTGNRRSHALN.

Belongs to the bacterial ribosomal protein bL28 family.

The protein is Large ribosomal subunit protein bL28 of Staphylococcus carnosus (strain TM300).